The primary structure comprises 160 residues: UPF0225 protein CGSHiEE_01665 (160 aa).

This sequence belongs to the UPF0225 family.

The protein is UPF0225 protein CGSHiEE_01665 of Haemophilus influenzae (strain PittEE).